Consider the following 92-residue polypeptide: 11 kDa excretory-secretory protein (92 aa).

This chain is 11 kDa excretory-secretory protein, found in Trichostrongylus colubriformis (Black scour worm).